The primary structure comprises 716 residues: ATP-dependent DNA helicase DinG (716 aa).

Residues 17–294 enclose the Helicase ATP-binding domain; that stretch reads ALQEQIPDFI…TCMEQFRPKT (278 aa). An ATP-binding site is contributed by 54 to 61; sequence APTGVGKT. C120 contacts [4Fe-4S] cluster. A DEAH box motif is present at residues 131 to 134; the sequence is EPTQ. The [4Fe-4S] cluster site is built by C194, C199, and C205. A DEAH box motif is present at residues 248-251; the sequence is DEGH. In terms of domain architecture, Helicase C-terminal spans 487–698; it reads ALDSPFNHCE…VFPIEQPEVP (212 aa).

Belongs to the helicase family. DinG subfamily. Type 1 sub-subfamily. It depends on [4Fe-4S] cluster as a cofactor.

It carries out the reaction Couples ATP hydrolysis with the unwinding of duplex DNA at the replication fork by translocating in the 5'-3' direction. This creates two antiparallel DNA single strands (ssDNA). The leading ssDNA polymer is the template for DNA polymerase III holoenzyme which synthesizes a continuous strand.. The catalysed reaction is ATP + H2O = ADP + phosphate + H(+). Its function is as follows. DNA-dependent ATPase and 5'-3' DNA helicase. Unwinds D-loops, R-loops, forked DNA and G-quadruplex DNA. This Shigella flexneri protein is ATP-dependent DNA helicase DinG.